The sequence spans 659 residues: Envelope glycoprotein (659 aa).

Positions 1-35 (MLLISNPRHLGHPMSPGNWKRLIILLSCVFGGAEM) are cleaved as a signal peptide. The Extracellular portion of the chain corresponds to 36 to 606 (NQQHNNPHQP…NRSPWLTTLL (571 aa)). Cystine bridges form between C141/C162 and C154/C167. The segment at 278-301 (LSPPASPIPTVQASPPAPSTPSPT) is disordered. N-linked (GlcNAc...) asparagine; by host glycosylation occurs at N318. 3 cysteine pairs are disulfide-bonded: C328–C331, C328–C558, and C550–C557. Positions 328-331 (CWLC) match the CXXC motif. Residues N389, N395, N407, and N427 are each glycosylated (N-linked (GlcNAc...) asparagine; by host). Residues 466 to 486 (VSLTLAVLLGLGVAAGIGTGS) are fusion peptide. A coiled-coil region spans residues 506–532 (AMDTDLRALQDSISKLEDSLTSLSEVV). Residues 533–549 (LQNRRGLDLLFLKEGGL) form an immunosuppression region. The CX6CC motif lies at 550 to 558 (CAALKEECC). A coiled-coil region spans residues 567–587 (VRDSMRRLKERLDKRQLEHQK). The chain crosses the membrane as a helical span at residues 607–627 (SALAGPLLLLLLLLTLGPCVI). Residue C625 is the site of S-palmitoyl cysteine; by host attachment. The Cytoplasmic portion of the chain corresponds to 628–659 (NKLVQFINDRVSAVRILVLRHKYQTLDNEDNL). Positions 650–653 (YQTL) match the YXXL motif; contains endocytosis signal motif.

In terms of assembly, the mature envelope protein (Env) consists of a trimer of SU-TM heterodimers attached by a labile interchain disulfide bond. Specific enzymatic cleavages in vivo yield mature proteins. Envelope glycoproteins are synthesized as an inactive precursor that is N-glycosylated and processed likely by host cell furin or by a furin-like protease in the Golgi to yield the mature SU and TM proteins. The cleavage site between SU and TM requires the minimal sequence [KR]-X-[KR]-R. The R-peptide is released from the C-terminus of the cytoplasmic tail of the TM protein upon particle formation as a result of proteolytic cleavage by the viral protease. Cleavage of this peptide is required for TM to become fusogenic. In terms of processing, the CXXC motif is highly conserved across a broad range of retroviral envelope proteins. It is thought to participate in the formation of a labile disulfide bond possibly with the CX6CC motif present in the transmembrane protein. Isomerization of the intersubunit disulfide bond to an SU intrachain disulfide bond is thought to occur upon receptor recognition in order to allow membrane fusion. Post-translationally, the transmembrane protein is palmitoylated. The R-peptide is palmitoylated.

It localises to the virion membrane. The protein localises to the host cell membrane. Functionally, the surface protein (SU) attaches the virus to the host cell by binding to its receptor. This interaction triggers the refolding of the transmembrane protein (TM) and is thought to activate its fusogenic potential by unmasking its fusion peptide. Fusion occurs at the host cell plasma membrane. Its function is as follows. The transmembrane protein (TM) acts as a class I viral fusion protein. Under the current model, the protein has at least 3 conformational states: pre-fusion native state, pre-hairpin intermediate state, and post-fusion hairpin state. During viral and target cell membrane fusion, the coiled coil regions (heptad repeats) assume a trimer-of-hairpins structure, positioning the fusion peptide in close proximity to the C-terminal region of the ectodomain. The formation of this structure appears to drive apposition and subsequent fusion of viral and target cell membranes. Membranes fusion leads to delivery of the nucleocapsid into the cytoplasm. The sequence is that of Envelope glycoprotein (env) from Phascolarctos cinereus (Koala).